We begin with the raw amino-acid sequence, 673 residues long: MSHAPIQTAALSWNEQGTPVSKQFDDVYFSNQDGLEETRYVFLKGNRLPSRFAEHPRPLFIVAETGFGTGLNFLTLWQAFADFHATTPDATLQRLHFISFEKFPLLQADLAAAHARWPELAPYADELRAQWPLPLPGCHRLLLAEGRITLDLWFGDVNELLPHFDASMHRQIDAWFLDGFAPSKNPDMWTEQLFAAMARFARPGGSLATFTAAGFVRRGLQQAGFEVIKSKGFGQKREMLIGELPADAPAVAHPTPWLLRPAADNTDDIAIIGGGVASALTALALLRRGAKVTLYCADPQAAEGASGNRQGALYPLLNGRGDALENFFSAAFLFARRQYDALLKQGVTFDHQWCGVSQLAYDEKSAGKIANMLAVEWPQQLAVAADRTTLSALCGIDSGFGGINYPQGGWLCPAELTRNAIALAQHQGLSCHYESDVKALTATDSGWQLSFNQEETRQHATVILANGHRLGELAPSEALPVYAVRGQVSHIPTTPALSELKQVLCYDGYLTPVNANNQQHCIGASYQRGETATEYREEEQQDNRARLLRCLPEQSWPAQVDVSGQHARCGVRSATRDHLPMIGAVPDYQATLTQYQHLQRQHQRGEAIANAPSYPNLFVIGALGSRGLCSAPLAAEILAAQLFGEPLPGDADMLAALNPNRMWVRKLLKGRAV.

Residues Met-1–Pro-245 are tRNA (mnm(5)s(2)U34)-methyltransferase. Positions Ile-272 to Val-673 are FAD-dependent cmnm(5)s(2)U34 oxidoreductase.

This sequence in the N-terminal section; belongs to the methyltransferase superfamily. tRNA (mnm(5)s(2)U34)-methyltransferase family. It in the C-terminal section; belongs to the DAO family. FAD is required as a cofactor.

It is found in the cytoplasm. It catalyses the reaction 5-aminomethyl-2-thiouridine(34) in tRNA + S-adenosyl-L-methionine = 5-methylaminomethyl-2-thiouridine(34) in tRNA + S-adenosyl-L-homocysteine + H(+). Its function is as follows. Catalyzes the last two steps in the biosynthesis of 5-methylaminomethyl-2-thiouridine (mnm(5)s(2)U) at the wobble position (U34) in tRNA. Catalyzes the FAD-dependent demodification of cmnm(5)s(2)U34 to nm(5)s(2)U34, followed by the transfer of a methyl group from S-adenosyl-L-methionine to nm(5)s(2)U34, to form mnm(5)s(2)U34. The chain is tRNA 5-methylaminomethyl-2-thiouridine biosynthesis bifunctional protein MnmC from Serratia proteamaculans (strain 568).